We begin with the raw amino-acid sequence, 154 residues long: 6,7-dimethyl-8-ribityllumazine synthase (154 aa).

5-amino-6-(D-ribitylamino)uracil-binding positions include Phe26, 60 to 62 (ALE), and 84 to 86 (CII). 89–90 (ET) is a (2S)-2-hydroxy-3-oxobutyl phosphate binding site. The Proton donor role is filled by His92. 5-amino-6-(D-ribitylamino)uracil is bound at residue Asn117. Position 131 (Arg131) interacts with (2S)-2-hydroxy-3-oxobutyl phosphate.

The protein belongs to the DMRL synthase family.

It carries out the reaction (2S)-2-hydroxy-3-oxobutyl phosphate + 5-amino-6-(D-ribitylamino)uracil = 6,7-dimethyl-8-(1-D-ribityl)lumazine + phosphate + 2 H2O + H(+). The protein operates within cofactor biosynthesis; riboflavin biosynthesis; riboflavin from 2-hydroxy-3-oxobutyl phosphate and 5-amino-6-(D-ribitylamino)uracil: step 1/2. Its function is as follows. Catalyzes the formation of 6,7-dimethyl-8-ribityllumazine by condensation of 5-amino-6-(D-ribitylamino)uracil with 3,4-dihydroxy-2-butanone 4-phosphate. This is the penultimate step in the biosynthesis of riboflavin. The polypeptide is 6,7-dimethyl-8-ribityllumazine synthase (Acidovorax sp. (strain JS42)).